Here is a 732-residue protein sequence, read N- to C-terminus: Elongation factor 2 (732 aa).

Positions 19 to 260 constitute a tr-type G domain; the sequence is ERIRNIGIAA…MVVRHLPSPI (242 aa). Residues 28 to 35, 94 to 98, and 148 to 151 each bind GTP; these read AHIDHGKT, DTPGH, and NKVD. A Diphthamide modification is found at histidine 597.

The protein belongs to the TRAFAC class translation factor GTPase superfamily. Classic translation factor GTPase family. EF-G/EF-2 subfamily.

It localises to the cytoplasm. In terms of biological role, catalyzes the GTP-dependent ribosomal translocation step during translation elongation. During this step, the ribosome changes from the pre-translocational (PRE) to the post-translocational (POST) state as the newly formed A-site-bound peptidyl-tRNA and P-site-bound deacylated tRNA move to the P and E sites, respectively. Catalyzes the coordinated movement of the two tRNA molecules, the mRNA and conformational changes in the ribosome. This chain is Elongation factor 2 (fusA), found in Pyrococcus horikoshii (strain ATCC 700860 / DSM 12428 / JCM 9974 / NBRC 100139 / OT-3).